A 376-amino-acid polypeptide reads, in one-letter code: Probable transcription factor At1g61730 (376 aa).

The interval 1–150 (MTKKLNPLED…RVKKDEESVK (150 aa)) is disordered. A compositionally biased stretch (acidic residues) spans 17-40 (SDEDDVETSEAGEASDDSSSSEED). A Phosphoserine modification is found at Ser-49. A compositionally biased stretch (low complexity) spans 49 to 72 (SPSATTAAAPPAKSTAVSTAADSD). Residues 73–83 (SGSETETDSDS) show a composition bias toward acidic residues. The span at 87–103 (NPPNSGSGKTIALNTVN) shows a compositional bias: polar residues.

It belongs to the GeBP family. In terms of assembly, interacts with DEK3.

This chain is Probable transcription factor At1g61730, found in Arabidopsis thaliana (Mouse-ear cress).